We begin with the raw amino-acid sequence, 234 residues long: Phosphatidylinositol phosphate synthase (234 aa).

2 helical membrane-spanning segments follow: residues 28-48 (LTPD…ALVL) and 54-70 (LFPG…FDML). An a CDP-1,2-diacyl-sn-glycerol-binding site is contributed by 31 to 34 (DAVT). Residues D68 and D71 each coordinate Mg(2+). Residues G72, R76, and T82 each contribute to the a CDP-1,2-diacyl-sn-glycerol site. Mg(2+)-binding residues include D89 and D93. A run of 4 helical transmembrane segments spans residues 91–110 (ACDR…WVAF), 116–134 (LLVV…ISYI), 155–173 (RLII…FIAW), and 179–197 (VAMW…QRLY). Residue D93 is the Proton acceptor of the active site. The segment at 211–234 (PSAPVRDDDAQGHPRSGDPGKTQR) is disordered. Over residues 215–228 (VRDDDAQGHPRSGD) the composition is skewed to basic and acidic residues.

The protein belongs to the CDP-alcohol phosphatidyltransferase class-I family. Homodimer. Requires Mg(2+) as cofactor.

Its subcellular location is the cell membrane. It carries out the reaction a CDP-1,2-diacyl-sn-glycerol + 1D-myo-inositol 3-phosphate = a 1,2-diacyl-sn-glycero-3-phospho-(1D-myo-inositol-3-phosphate) + CMP + H(+). The enzyme catalyses 1,2-di-(9Z-octadecenoyl)-sn-glycero-3-cytidine-5'-diphosphate + 1D-myo-inositol 3-phosphate = 1,2-di-(9Z-octadecenoyl)-sn-glycero-3-phospho-(1D-myo-inositol-3-phosphate) + CMP + H(+). The protein operates within phospholipid metabolism; phosphatidylinositol phosphate biosynthesis. Its function is as follows. Catalyzes the conjugation of the 1'-hydroxyl group of D-myo-inositol-3-phosphate (also named L-myo-inositol-1-phosphate) with a lipid tail of cytidine diphosphate diacylglycerol (CDP-DAG), forming phosphatidylinositol phosphate (PIP) and CMP. PIP is a precursor of phosphatidylinositol (PI) which is an essential lipid for mycobacteria required for formation of their cell wall. In Mycobacterium marinum (strain ATCC BAA-535 / M), this protein is Phosphatidylinositol phosphate synthase.